Here is a 352-residue protein sequence, read N- to C-terminus: Endoplasmic reticulum GDP-fucose transporter (352 aa).

The next 10 helical transmembrane spans lie at 9-29, 34-54, 70-90, 96-116, 126-146, 163-183, 201-221, 249-271, 276-298, and 305-325; these read LGML…ELII, GAGN…GLVF, YVIL…AFNF, LHMI…IVLL, SSVA…SGDV, FFWW…TAYM, ALFF…GNIV, LMLF…VYVL, ASLT…SIIY, and LNHW…ANVI. Residues 350 to 352 carry the Prevents secretion from ER motif; it reads KVE.

Belongs to the nucleotide-sugar transporter family. SLC35B subfamily.

The protein localises to the endoplasmic reticulum membrane. Functionally, sugar transporter that specifically mediates the transport of UDP-N-acetylglucosamine (UDP-GlcNAc), GDP-fucose and UDP-xylose. Functions redundantly with Gfr in the O-fucosylation of Notch, positively regulating Notch signaling. Involved in the biosynthesis of heparan sulfate-glycosaminoglycan (HS-GAG) and in Dpp signaling in the wing imaginal disk. The sequence is that of Endoplasmic reticulum GDP-fucose transporter from Drosophila melanogaster (Fruit fly).